The primary structure comprises 119 residues: DNA-binding protein inhibitor ID-3 (119 aa).

In terms of domain architecture, bHLH spans 28-80; the sequence is RGKGPAAEEPLSLLDDMNHCYSRLRELVPGVPRGTQLSQVEILQRVIDYILDL.

In terms of assembly, homodimer, and heterodimer with other HLH proteins. Interacts with COPS5 and COPS7A. Interacts with IFI204. Interacts with GATA4 and NKX2-5. Interacts with ANKRD2; both proteins cooperate in myoblast differentiation. Interacts with CLOCK and BMAL1. Expressed abundantly in lung, kidney and adrenal gland, but not in adult brain.

The protein localises to the nucleus. In terms of biological role, transcriptional regulator (lacking a basic DNA binding domain) which negatively regulates the basic helix-loop-helix (bHLH) transcription factors by forming heterodimers and inhibiting their DNA binding and transcriptional activity. Implicated in regulating a variety of cellular processes, including cellular growth, senescence, differentiation, apoptosis, angiogenesis, and neoplastic transformation. Involved in myogenesis by inhibiting skeletal muscle and cardiac myocyte differentiation and promoting muscle precursor cells proliferation. Inhibits the binding of E2A-containing protein complexes to muscle creatine kinase E-box enhancer. Regulates the circadian clock by repressing the transcriptional activator activity of the CLOCK-BMAL1 heterodimer. The sequence is that of DNA-binding protein inhibitor ID-3 (ID3) from Homo sapiens (Human).